Reading from the N-terminus, the 247-residue chain is Ribose-5-phosphate isomerase (247 aa).

Belongs to the ribose 5-phosphate isomerase family.

Its subcellular location is the cytoplasm. The catalysed reaction is aldehydo-D-ribose 5-phosphate = D-ribulose 5-phosphate. Its pathway is carbohydrate degradation; pentose phosphate pathway; D-ribose 5-phosphate from D-ribulose 5-phosphate (non-oxidative stage): step 1/1. This Meyerozyma guilliermondii (strain ATCC 6260 / CBS 566 / DSM 6381 / JCM 1539 / NBRC 10279 / NRRL Y-324) (Yeast) protein is Ribose-5-phosphate isomerase (RKI1).